A 448-amino-acid polypeptide reads, in one-letter code: Adenylosuccinate synthetase (448 aa).

Residues 36-42 and 64-66 each bind GTP; these read GDEGKGK and GHT. Catalysis depends on D37, which acts as the Proton acceptor. Mg(2+)-binding residues include D37 and G64. Residues 37–40, 62–65, T154, R168, N246, T261, and R325 contribute to the IMP site; these read DEGK and NAGH. H65 (proton donor) is an active-site residue. 321 to 327 lines the substrate pocket; the sequence is VTTKRKR. GTP contacts are provided by residues R327, 353–355, and 436–438; these read KLD and GVG.

It belongs to the adenylosuccinate synthetase family. Homodimer. It depends on Mg(2+) as a cofactor.

It is found in the cytoplasm. It carries out the reaction IMP + L-aspartate + GTP = N(6)-(1,2-dicarboxyethyl)-AMP + GDP + phosphate + 2 H(+). Its pathway is purine metabolism; AMP biosynthesis via de novo pathway; AMP from IMP: step 1/2. Plays an important role in the de novo pathway and in the salvage pathway of purine nucleotide biosynthesis. Catalyzes the first committed step in the biosynthesis of AMP from IMP. The polypeptide is Adenylosuccinate synthetase (Drosophila pseudoobscura pseudoobscura (Fruit fly)).